A 684-amino-acid polypeptide reads, in one-letter code: Glycine--tRNA ligase beta subunit (684 aa).

Belongs to the class-II aminoacyl-tRNA synthetase family. In terms of assembly, tetramer of two alpha and two beta subunits.

Its subcellular location is the cytoplasm. The catalysed reaction is tRNA(Gly) + glycine + ATP = glycyl-tRNA(Gly) + AMP + diphosphate. This Stutzerimonas stutzeri (strain A1501) (Pseudomonas stutzeri) protein is Glycine--tRNA ligase beta subunit.